Here is a 434-residue protein sequence, read N- to C-terminus: tRNA dimethylallyltransferase (434 aa).

10 to 17 (GTTGAGKS) contributes to the ATP binding site. 12 to 17 (TGAGKS) is a binding site for substrate. 2 interaction with substrate tRNA regions span residues 35 to 38 (DSMQ) and 166 to 170 (RKIRR). Residues 211-233 (SLVLMPRLDKRVDKMLSHGLVDE) are interaction with isopentenylpyrophosphate transferase. 3 interaction with substrate tRNA regions span residues 256 to 258 (QCI), 281 to 299 (RMKVSTRQYAKSQKKWIQS), and 291 to 298 (KSQKKWIQ). The segment at 380–416 (FVCEECLDKRGDPFTVIGEDAFNVHIKSRKHKTTVRR) adopts a Matrin-type zinc-finger fold.

Belongs to the IPP transferase family.

It localises to the mitochondrion. Its subcellular location is the cytoplasm. The protein resides in the nucleus. The catalysed reaction is adenosine(37) in tRNA + dimethylallyl diphosphate = N(6)-dimethylallyladenosine(37) in tRNA + diphosphate. Its function is as follows. Catalyzes the transfer of a dimethylallyl group onto the adenine at position 37 of both cytosolic and mitochondrial tRNAs, leading to the formation of N6-(dimethylallyl)adenosine (i(6)A). This is tRNA dimethylallyltransferase (tit1) from Schizosaccharomyces pombe (strain 972 / ATCC 24843) (Fission yeast).